We begin with the raw amino-acid sequence, 217 residues long: Ribosomal RNA small subunit methyltransferase G (217 aa).

Residues G79, L84, 102–104 (DST), 130–131 (VE), and R144 each bind S-adenosyl-L-methionine.

The protein belongs to the methyltransferase superfamily. RNA methyltransferase RsmG family.

It localises to the cytoplasm. Specifically methylates the N7 position of a guanine in 16S rRNA. The sequence is that of Ribosomal RNA small subunit methyltransferase G from Chlorobaculum tepidum (strain ATCC 49652 / DSM 12025 / NBRC 103806 / TLS) (Chlorobium tepidum).